A 575-amino-acid chain; its full sequence is UvrABC system protein C (575 aa).

In terms of domain architecture, GIY-YIG spans 15-90; the sequence is AEPGVYQFEA…IKRHQPRYNV (76 aa). The UVR domain occupies 198–233; the sequence is GVLAEPLRREMETAAASQAFERAASLRDRLEAVETF.

Belongs to the UvrC family. Interacts with UvrB in an incision complex.

Its subcellular location is the cytoplasm. Its function is as follows. The UvrABC repair system catalyzes the recognition and processing of DNA lesions. UvrC both incises the 5' and 3' sides of the lesion. The N-terminal half is responsible for the 3' incision and the C-terminal half is responsible for the 5' incision. The chain is UvrABC system protein C from Natronomonas pharaonis (strain ATCC 35678 / DSM 2160 / CIP 103997 / JCM 8858 / NBRC 14720 / NCIMB 2260 / Gabara) (Halobacterium pharaonis).